A 130-amino-acid chain; its full sequence is 3-aminoacrylate deaminase RutC (130 aa).

The protein belongs to the RutC family.

It carries out the reaction (Z)-3-aminoacrylate + H2O + H(+) = 3-oxopropanoate + NH4(+). In terms of biological role, involved in pyrimidine catabolism. Catalyzes the deamination of 3-aminoacrylate to malonic semialdehyde, a reaction that can also occur spontaneously. RutC may facilitate the reaction and modulate the metabolic fitness, rather than catalyzing essential functions. The protein is 3-aminoacrylate deaminase RutC of Haliangium ochraceum (strain DSM 14365 / JCM 11303 / SMP-2).